We begin with the raw amino-acid sequence, 266 residues long: Luciferase (266 aa).

A helical transmembrane segment spans residues 22–41 (GLATACCAVAVASAIAFPYI).

Belongs to the fungal luciferase family.

The protein localises to the membrane. The enzyme catalyses 3-hydroxyhispidin + O2 = (E)-caffeoylpyruvate + hnu + CO2. It carries out the reaction 3-hydroxyhispidin + O2 = 4-[(E)-2-(3,4-dihydroxyphenyl)ethenyl]-1,7-dihydroxy-2,3,5-trioxabicyclo[2.2.2]oct-7-en-6-one. In terms of biological role, luciferase; part of the gene cluster that mediates the fungal bioluminescence cycle. Uses the fungal luciferin 3-hydroxyhispidin as a substrate to produce an endoperoxide as a high-energy intermediate with decomposition that yields oxyluciferin (also known as caffeoylpyruvate) and light emission. The fungal bioluminescence cycle begins with the hispidin synthetase that catalyzes the formation of hispidin which is further hydroxylated by the hispidin-3-hydroxylase, yielding the fungal luciferin 3-hydroxyhispidin. The luciferase then produces an endoperoxide as a high-energy intermediate with decomposition that yields oxyluciferin and light emission. Oxyluciferin can be recycled to caffeic acid by caffeoylpyruvate hydrolase. The sequence is that of Luciferase from Armillaria ostoyae (Armillaria root rot fungus).